We begin with the raw amino-acid sequence, 461 residues long: Sensor histidine kinase MctS (461 aa).

The next 2 helical transmembrane spans lie at 7–27 (IIAL…TFIT) and 203–223 (FVIV…TCML). His-259 is subject to Phosphohistidine; by autocatalysis. Residues 360–450 (LYRVAQEAFN…TLTAMMPKSA (91 aa)) enclose the Histidine kinase domain.

It is found in the cell membrane. It carries out the reaction ATP + protein L-histidine = ADP + protein N-phospho-L-histidine.. In terms of biological role, member of the two-component regulatory system MctS/MctR, which activates mctP expression. The protein is Sensor histidine kinase MctS of Rhizobium johnstonii (strain DSM 114642 / LMG 32736 / 3841) (Rhizobium leguminosarum bv. viciae).